Here is a 539-residue protein sequence, read N- to C-terminus: Cytochrome P450 monooxygenase tenB (539 aa).

Residues 13–33 (LGYYEKVAGVLGFLSIALLFW) form a helical membrane-spanning segment. Residues 439–460 (PFRFSRASKDDDDDGKSTSSHA) are disordered. C481 lines the heme pocket.

Belongs to the cytochrome P450 family. It depends on heme as a cofactor.

The protein resides in the membrane. It functions in the pathway secondary metabolite biosynthesis. Cytochrome P450 monooxygenase; part of the gene cluster that mediates the biosynthesis of tenellin-type 2-pyridones, iron-chelating compounds involved in iron stress tolerance, competition with the natural competitor fungus Metarhizium robertsii and insect hosts infection. TenB catalyzes the selective N-hydroxylation of the 2-pyridone nitrogen of yield tellinin and 15-hydroxytellenin (15-HT), respectively. The pathway begins with the assembly of the polyketide-amino acid backbone by the hybrid PKS-NRPS tenS with the help of the enoyl reductase tenC. These enzymes catalyze the synthesis of the pyrrolidine-2-dione intermediates pretellinin A, 11-hydropretellenin A, 12-hydropretellenin A, 13-hydropretellenin A, 14-hydropretellenin A, 12-oxopretellenin A and prototellinin D. The cytochrome P450 monooxygenase tenA then catalyzes an oxidative ring expansion of pretenellin A and 14-hydropretellenin A to form the 2-pyridone core, leading to pretenellin B and pyridovericin, respectively. The cytochrome P450 monooxygenase tenB is then required for the selective N-hydroxylation of the 2-pyridone nitrogen of yield tellinin and 15-hydroxytellenin (15-HT), respectively. The UDP-glucosyltransferase GT1 and the methyltransferase MT1, located outside the tenS gene cluster, contribute to the stepwise glycosylation and methylation of 15-HT to obtain the glycoside pyridovericin-N-O-(4-O-methyl-beta-D-glucopyranoside) (PMGP). Additional related compounds such as 1-O-methyl-15-HT, (8Z)-1-O-methyl-15-HT, and O-methyltenellin A are also produced but the enzymes involved in their biosynthesis have still to be determined. This Beauveria bassiana (White muscardine disease fungus) protein is Cytochrome P450 monooxygenase tenB.